The chain runs to 147 residues: Probable flagellum biosynthesis repressor protein FlbT (147 aa).

This sequence belongs to the FlbT family.

Functionally, has a post-transcriptional repressor function in flagellum biogenesis. Associates with the 5'-UTR of fljK mRNA and promotes its degradation. This is Probable flagellum biosynthesis repressor protein FlbT from Mesorhizobium japonicum (strain LMG 29417 / CECT 9101 / MAFF 303099) (Mesorhizobium loti (strain MAFF 303099)).